The primary structure comprises 297 residues: MATTSVSSPKSKPSWVSFLSGGLAGVTAKSAVAPLERVKILYQIKSELYSLNSVYGSMLKIVENEGIKGLWRGNSATILRVFPYAAVQFLSYETIKNHLVADKSSSFQIFLAGSAAGGIAVCATYPLDLLRARLAIEIHKKPTKPHHLLKSTFTKDGVKGIYRGIQPTLIGILPYGGISFSTFEFLKRIAPLNEIDENGQISGTYKLIAGGIAGGVAQTVAYPFDVVRRRVQTHGFGDAKAVVNLEHGTLRTIAHILKEEGILALYKGLSINYVKVIPTASIAFYTYEYLSNFFNKL.

3 Solcar repeats span residues 12 to 98, 104 to 189, and 201 to 293; these read KPSW…IKNH, SSSF…LKRI, and ISGT…LSNF. The next 6 membrane-spanning stretches (helical) occupy residues 15–35, 66–86, 107–127, 165–185, 207–227, and 262–282; these read WVSF…VAPL, GIKG…PYAA, FQIF…TYPL, IQPT…TFEF, LIAG…FDVV, and ILAL…TASI.

The protein belongs to the mitochondrial carrier (TC 2.A.29) family.

It is found in the mitochondrion inner membrane. Its function is as follows. Mitochondrial solute carriers shuttle metabolites, nucleotides, and cofactors through the mitochondrial inner membrane. Required for the accumulation of coenzyme A in the mitochondrial matrix. The polypeptide is Mitochondrial substrate carrier family protein P (mcfP) (Dictyostelium discoideum (Social amoeba)).